We begin with the raw amino-acid sequence, 575 residues long: Sorting nexin-41 (575 aa).

The segment at 30–66 (TDGPDDYDFTEPSINGSSDENAQSNAVAEPIEETDEP) is disordered. Over residues 41 to 55 (PSINGSSDENAQSNA) the composition is skewed to polar residues. Residues 101-221 (QGKNPEVIRI…QKFLNPEYFW (121 aa)) enclose the PX domain. 4 residues coordinate a 1,2-diacyl-sn-glycero-3-phospho-(1D-myo-inositol-3-phosphate): arginine 139, serine 141, lysine 165, and arginine 188. The tract at residues 467 to 486 (FRSSASPNNKSGSDSISSEV) is disordered. Residues 469–484 (SSASPNNKSGSDSISS) show a composition bias toward polar residues.

Belongs to the sorting nexin family.

The protein resides in the endosome membrane. It localises to the endomembrane system. Functionally, may be required for cytoplasm to vacuole transport (Cvt) and pexophagy. The chain is Sorting nexin-41 (SNX41) from Kluyveromyces lactis (strain ATCC 8585 / CBS 2359 / DSM 70799 / NBRC 1267 / NRRL Y-1140 / WM37) (Yeast).